We begin with the raw amino-acid sequence, 280 residues long: Probable endonuclease 4 (280 aa).

The Zn(2+) site is built by histidine 69, histidine 109, glutamate 145, aspartate 179, histidine 182, histidine 216, aspartate 229, histidine 231, and glutamate 261.

It belongs to the AP endonuclease 2 family. Zn(2+) serves as cofactor.

The enzyme catalyses Endonucleolytic cleavage to 5'-phosphooligonucleotide end-products.. In terms of biological role, endonuclease IV plays a role in DNA repair. It cleaves phosphodiester bonds at apurinic or apyrimidinic (AP) sites, generating a 3'-hydroxyl group and a 5'-terminal sugar phosphate. The sequence is that of Probable endonuclease 4 from Actinobacillus pleuropneumoniae serotype 5b (strain L20).